The chain runs to 124 residues: Ribonuclease pancreatic (124 aa).

The disordered stretch occupies residues 1–21; sequence AESSAMKFQRQHMDSDGHPDT. Substrate contacts are provided by lysine 7 and arginine 10. Residue histidine 12 is the Proton acceptor of the active site. Cystine bridges form between cysteine 26-cysteine 84, cysteine 40-cysteine 95, cysteine 58-cysteine 110, and cysteine 65-cysteine 72. Substrate-binding positions include 41 to 45, lysine 66, and arginine 85; that span reads KPVNT. Histidine 119 serves as the catalytic Proton donor.

Belongs to the pancreatic ribonuclease family. Monomer. Interacts with and forms tight 1:1 complexes with RNH1. Dimerization of two such complexes may occur. Interaction with RNH1 inhibits this protein. Pancreas.

The protein resides in the secreted. It catalyses the reaction an [RNA] containing cytidine + H2O = an [RNA]-3'-cytidine-3'-phosphate + a 5'-hydroxy-ribonucleotide-3'-[RNA].. The catalysed reaction is an [RNA] containing uridine + H2O = an [RNA]-3'-uridine-3'-phosphate + a 5'-hydroxy-ribonucleotide-3'-[RNA].. Endonuclease that catalyzes the cleavage of RNA on the 3' side of pyrimidine nucleotides. Acts on single-stranded and double-stranded RNA. This is Ribonuclease pancreatic (RNASE1) from Galea musteloides (Common yellow-toothed cavy).